A 144-amino-acid polypeptide reads, in one-letter code: Large ribosomal subunit protein uL15 (144 aa).

Polar residues predominate over residues 1-12 (MRLNTLSPSLGS). Residues 1–51 (MRLNTLSPSLGSRKNHKRLGRGIGSGFGKTAGRGHKGQKSRSGGHVNRGFE) form a disordered region. The span at 21–31 (RGIGSGFGKTA) shows a compositional bias: gly residues.

This sequence belongs to the universal ribosomal protein uL15 family. Part of the 50S ribosomal subunit.

In terms of biological role, binds to the 23S rRNA. This Buchnera aphidicola subsp. Schizaphis graminum (strain Sg) protein is Large ribosomal subunit protein uL15.